We begin with the raw amino-acid sequence, 243 residues long: Large ribosomal subunit protein uL3 (243 aa).

Disordered stretches follow at residues 139–164 and 218–243; these read VSHR…KMPG and KPGK…QEGV. Q151 is subject to N5-methylglutamine. The span at 231 to 243 shows a compositional bias: low complexity; the sequence is QTAAAPAAEQEGV.

It belongs to the universal ribosomal protein uL3 family. As to quaternary structure, part of the 50S ribosomal subunit. Forms a cluster with proteins L14 and L19. Post-translationally, methylated by PrmB.

Its function is as follows. One of the primary rRNA binding proteins, it binds directly near the 3'-end of the 23S rRNA, where it nucleates assembly of the 50S subunit. The chain is Large ribosomal subunit protein uL3 from Rhodopseudomonas palustris (strain BisB18).